A 20-amino-acid polypeptide reads, in one-letter code: Large ribosomal subunit protein bL31 (20 aa).

Residues X16 and X18 each coordinate Zn(2+).

This sequence belongs to the bacterial ribosomal protein bL31 family. Type A subfamily. As to quaternary structure, part of the 50S ribosomal subunit. Zn(2+) serves as cofactor.

Binds the 23S rRNA. In Ectopseudomonas mendocina (Pseudomonas mendocina), this protein is Large ribosomal subunit protein bL31 (rpmE).